Reading from the N-terminus, the 393-residue chain is Cholinephosphotransferase 1 (393 aa).

Residues 1–40 are Lumenal-facing; the sequence is MGFFIPQSSLGNLKLYKYQSDDRSFLSNHVLRPFWRKFAT. A helical membrane pass occupies residues 41 to 61; that stretch reads IFPLWMAPNLVTLLGFCFIIF. Topologically, residues 62-172 are cytoplasmic; that stretch reads NVLTTLYYDP…YHTHKLYLAE (111 aa). A helical transmembrane segment spans residues 173–193; it reads FCGPVEGIIVLCISFIAVGIY. The Lumenal segment spans residues 194–210; that stretch reads GPQTIWHTKVAQFSWQD. Residues 211–231 form a helical membrane-spanning segment; that stretch reads FVFDVETVHLMYAFCTGALIF. The Cytoplasmic segment spans residues 232 to 263; the sequence is NIVTAHTNVVRYYESQSTKSATPSKTAENISK. A helical membrane pass occupies residues 264–284; the sequence is AVNGLLPFFAYFSSIFTLVLI. A topological domain (lumenal) is located at residue glutamine 285. Residues 286–306 form a helical membrane-spanning segment; sequence PSFISLALILSIGFSVAFVVG. Over 307 to 320 the chain is Cytoplasmic; it reads RMIIAHLTMQPFPM. The chain crosses the membrane as a helical span at residues 321-341; the sequence is VNFPFLIPTIQLVLYAFMVYV. At 342–348 the chain is on the lumenal side; sequence LDYQKGS. A helical membrane pass occupies residues 349 to 369; that stretch reads IVSALVWMGLGLTLAIHGMFI. Topologically, residues 370–393 are cytoplasmic; that stretch reads NDIIYDITTFLDIYALSIKHPKEI.

It belongs to the CDP-alcohol phosphatidyltransferase class-I family. Requires Mg(2+) as cofactor.

Its subcellular location is the microsome membrane. The protein localises to the endoplasmic reticulum membrane. It is found in the mitochondrion outer membrane. It carries out the reaction CDP-choline + a 1,2-diacyl-sn-glycerol = a 1,2-diacyl-sn-glycero-3-phosphocholine + CMP + H(+). The catalysed reaction is CDP-N,N-dimethylethanolamine + a 1,2-diacyl-sn-glycerol = a 1,2-diacyl-sn-glycero-3-phospho-N,N-dimethylethanolamine + CMP + H(+). It functions in the pathway phospholipid metabolism; phosphatidylcholine biosynthesis; phosphatidylcholine from phosphocholine: step 2/2. With respect to regulation, requires a divalent cation activator, and is inhibited by CMP. Activated by phospholipids, especially phosphatidylcholine. Catalyzes the final step in the CDP-choline route leading to phosphatidylcholin (PC). Preferentially uses CDP-monomethylethanolamine as aminoalcohol substrate. Shows highest activity toward di- and mono-unsaturated diacylglycerol species as lipid substrates. The CDP-choline pathway only contributes to net PC synthesis if exogenous choline is present. In its absence, this pathway recycles choline from PC turnover and may contribute to maintaining the proper PC species composition. In Saccharomyces cerevisiae (strain ATCC 204508 / S288c) (Baker's yeast), this protein is Cholinephosphotransferase 1 (CPT1).